The chain runs to 331 residues: MSMLAERRRKQKWAVDPRNTAWSNDDSKFGQKMLEKMGWSKGKGLGAQEQGATEHIKVKVKNNHLGLGATNNNEDNWIAHQDDFNQLLAALNTCHGQETADSSDNKEKKSFSLEEKSKISKNRVHYMKFTKGKDLSSRSETDLDCIFGKRRNKKLAQDGCSNSTADEADTSLTTTTTTTSAFTIQEYFAKRMAQLKSKSQAAAPGSDLSETPIEWKKGKKKTKEAAGTDIENSPQHKAKRHKKKKRVEAERGPAAKKRDQVELQPGGPSGDECSDASVEAAEDRVQTPDTQDDVPKPRKRRAKKTLQRPGGVAVDTAPDSAPVKKKKKVSR.

Disordered stretches follow at residues 1 to 28 (MSMLAERRRKQKWAVDPRNTAWSNDDSK), 156 to 175 (AQDGCSNSTADEADTSLTTT), and 197 to 331 (SKSQ…KVSR). The G-patch domain occupies 26–72 (DSKFGQKMLEKMGWSKGKGLGAQEQGATEHIKVKVKNNHLGLGATNN). A Phosphoserine modification is found at serine 233. Residues 236–246 (HKAKRHKKKKR) are compositionally biased toward basic residues. Positions 247–261 (VEAERGPAAKKRDQV) are enriched in basic and acidic residues. Positions 254-328 (AAKKRDQVEL…DSAPVKKKKK (75 aa)) are telomerase inhibitory domain (TID). Serine 269, serine 274, and serine 277 each carry phosphoserine. Residues 291–301 (QDDVPKPRKRR) carry the TBM motif. The span at 297-306 (PRKRRAKKTL) shows a compositional bias: basic residues.

This sequence belongs to the PINX1 family. In terms of assembly, interacts with MCRS1, TERT, TERF1, NCL/nucleolin, and the telomerase RNA.

The protein localises to the nucleus. Its subcellular location is the nucleolus. It localises to the chromosome. It is found in the telomere. The protein resides in the centromere. The protein localises to the kinetochore. Functionally, microtubule-binding protein essential for faithful chromosome segregation. Mediates TRF1 and TERT accumulation in nucleolus and enhances TRF1 binding to telomeres. Inhibits telomerase activity. May inhibit cell proliferation and act as tumor suppressor. This Rattus norvegicus (Rat) protein is PIN2/TERF1-interacting telomerase inhibitor 1.